Reading from the N-terminus, the 426-residue chain is Phosphomethylpyrimidine synthase (426 aa).

Substrate contacts are provided by residues Met-94, Tyr-123, His-162, 184–186, 225–228, and Glu-264; these read SRG and NGMR. Zn(2+) is bound at residue His-268. Position 291 (Tyr-291) interacts with substrate. Residue His-332 coordinates Zn(2+). Positions 406, 409, and 413 each coordinate [4Fe-4S] cluster.

This sequence belongs to the ThiC family. [4Fe-4S] cluster serves as cofactor.

It carries out the reaction 5-amino-1-(5-phospho-beta-D-ribosyl)imidazole + S-adenosyl-L-methionine = 4-amino-2-methyl-5-(phosphooxymethyl)pyrimidine + CO + 5'-deoxyadenosine + formate + L-methionine + 3 H(+). It participates in cofactor biosynthesis; thiamine diphosphate biosynthesis. Functionally, catalyzes the synthesis of the hydroxymethylpyrimidine phosphate (HMP-P) moiety of thiamine from aminoimidazole ribotide (AIR) in a radical S-adenosyl-L-methionine (SAM)-dependent reaction. The chain is Phosphomethylpyrimidine synthase from Methanospirillum hungatei JF-1 (strain ATCC 27890 / DSM 864 / NBRC 100397 / JF-1).